The sequence spans 396 residues: Probable sugar efflux transporter (396 aa).

A run of 12 helical transmembrane segments spans residues 15-35 (VVTL…PVGL), 50-70 (VGIM…PFML), 81-101 (LICL…AWNF), 103-123 (VLVI…SITA), 136-156 (AQAL…GLPI), 169-189 (TFFA…KLLP), 209-229 (PALM…YTAY), 246-266 (FATV…LVFG), 275-295 (LLVS…LPAA), 301-321 (LALL…GMQV), 333-353 (VAMA…ALAG), and 364-384 (TIGY…VLIF).

It belongs to the major facilitator superfamily. SotB (TC 2.A.1.2) family.

The protein resides in the cell inner membrane. Functionally, involved in the efflux of sugars. The physiological role may be the reduction of the intracellular concentration of toxic sugars or sugar metabolites. This is Probable sugar efflux transporter from Salmonella arizonae (strain ATCC BAA-731 / CDC346-86 / RSK2980).